The following is a 378-amino-acid chain: Glutamate 5-kinase (378 aa).

Lys-14 lines the ATP pocket. Substrate contacts are provided by Ser-54, Asp-141, and Asn-153. An ATP-binding site is contributed by 173-174; the sequence is SD. The 78-residue stretch at 279-356 folds into the PUA domain; that stretch reads AGRLTVDAGA…DEISEILGYD (78 aa).

This sequence belongs to the glutamate 5-kinase family.

Its subcellular location is the cytoplasm. The enzyme catalyses L-glutamate + ATP = L-glutamyl 5-phosphate + ADP. Its pathway is amino-acid biosynthesis; L-proline biosynthesis; L-glutamate 5-semialdehyde from L-glutamate: step 1/2. Functionally, catalyzes the transfer of a phosphate group to glutamate to form L-glutamate 5-phosphate. This chain is Glutamate 5-kinase, found in Brucella anthropi (strain ATCC 49188 / DSM 6882 / CCUG 24695 / JCM 21032 / LMG 3331 / NBRC 15819 / NCTC 12168 / Alc 37) (Ochrobactrum anthropi).